The primary structure comprises 465 residues: Botryococcus squalene synthase (465 aa).

The NADP(+) site is built by Arg-48 and Arg-73. Residues Asp-76, Glu-79, and Asp-80 each contribute to the Mg(2+) site. Residues Arg-215, Lys-315, and Arg-317 each coordinate NADP(+). The next 2 helical transmembrane spans lie at 395 to 415 (AIRLLLLVGVVAYFAYAFNLG) and 429 to 449 (ILDLSQKGLAVASVALLLLVL).

The protein belongs to the phytoene/squalene synthase family.

It localises to the membrane. The enzyme catalyses presqualene diphosphate + NADPH + H(+) = squalene + diphosphate + NADP(+). Its function is as follows. Produces squalene when coexpressed with SSL-1 and bisfarnesyl ether and a very small amount of squalene when incubated alone in the presence of NADPH. This chain is Botryococcus squalene synthase (SSL-2), found in Botryococcus braunii (Green alga).